We begin with the raw amino-acid sequence, 691 residues long: MARKTKLEDYRNIGIMAHIDAGKTTTTERILFYTGVSHKIGEVHDGAATMDWMEQEQERGITITSAATTCFWKDKRINIIDTPGHVDFTIEVERSLRVLDGAVTVFDSVAGVEPQSETVWRQADKYRVPRMCFVNKMDRMGANFYRCVDMIVTRLGAVPLVTQLPIGSEAEFEGLIDLLKMQEIVWKDESLGAEFEYRDIRPELKEQADEYHAKMVELAVEMDDAVMEAYLEGNEPDEATLKKLIRKGTISRKFVPVLCGSAFKNKGVQPMLDAVVDFLPSPLEVERMQGIDPKTEEPDTRGASDDEPLSVLAFKIMNDPFVGSLTFCRIYSGVMTTGTGVLNSTKDNRERIGRMLQMHANHREDIKEAYAGDIVAVAGLKNTTTGDTLCDPLKPIILERMEFPEPVIEVAVEPKTKADQEKMGIALNRLAQEDPSFRVSVDQESGQTVIKGMGELHLDILVDRMRREFKVDANVGAPQVAYRETLTKRAEIDYTHKKQTGGSGQFARVKIVFEPGEPGSGFQFESKIVGGSVPKEYIPGVQKGVESVKDSGPLAGFPMIDFKATLMDGAYHDVDSSVMAFEIASRAAFREGAQQAGVKLLEPIMKVEVVTPEEYMGDVIGDLNSRRGQISGTEQRGIAQVIHANVPLANMFGYVNTLRSMSQGRAQYTMQFDHYEQVPQAVSDEVRAKLA.

The tr-type G domain occupies 8 to 283 (EDYRNIGIMA…AVVDFLPSPL (276 aa)). GTP contacts are provided by residues 17 to 24 (AHIDAGKT), 81 to 85 (DTPGH), and 135 to 138 (NKMD).

This sequence belongs to the TRAFAC class translation factor GTPase superfamily. Classic translation factor GTPase family. EF-G/EF-2 subfamily.

It is found in the cytoplasm. Functionally, catalyzes the GTP-dependent ribosomal translocation step during translation elongation. During this step, the ribosome changes from the pre-translocational (PRE) to the post-translocational (POST) state as the newly formed A-site-bound peptidyl-tRNA and P-site-bound deacylated tRNA move to the P and E sites, respectively. Catalyzes the coordinated movement of the two tRNA molecules, the mRNA and conformational changes in the ribosome. The sequence is that of Elongation factor G from Parvibaculum lavamentivorans (strain DS-1 / DSM 13023 / NCIMB 13966).